Consider the following 364-residue polypeptide: Coproporphyrin III ferrochelatase (364 aa).

Residues Arg29 and Tyr118 each contribute to the Fe-coproporphyrin III site. Residues His169 and Glu250 each contribute to the Fe(2+) site.

It belongs to the ferrochelatase family.

The protein resides in the cytoplasm. The catalysed reaction is Fe-coproporphyrin III + 2 H(+) = coproporphyrin III + Fe(2+). The protein operates within porphyrin-containing compound metabolism; protoheme biosynthesis. In terms of biological role, involved in coproporphyrin-dependent heme b biosynthesis. Catalyzes the insertion of ferrous iron into coproporphyrin III to form Fe-coproporphyrin III. This Streptococcus pneumoniae (strain ATCC 700669 / Spain 23F-1) protein is Coproporphyrin III ferrochelatase.